A 438-amino-acid polypeptide reads, in one-letter code: 23S rRNA (uracil(1939)-C(5))-methyltransferase RlmD (438 aa).

Residues 11–69 enclose the TRAM domain; that stretch reads LQPESKHQQVLVEKLDHQGAGIAYLNKKPLFIDGTLPGEEVVTQLTESKSKFARGKLIK. Positions 82, 88, 91, and 169 each coordinate [4Fe-4S] cluster. S-adenosyl-L-methionine-binding residues include Q272, F301, N306, E322, N349, and D370. C396 functions as the Nucleophile in the catalytic mechanism.

Belongs to the class I-like SAM-binding methyltransferase superfamily. RNA M5U methyltransferase family. RlmD subfamily.

It catalyses the reaction uridine(1939) in 23S rRNA + S-adenosyl-L-methionine = 5-methyluridine(1939) in 23S rRNA + S-adenosyl-L-homocysteine + H(+). Catalyzes the formation of 5-methyl-uridine at position 1939 (m5U1939) in 23S rRNA. This Vibrio vulnificus (strain CMCP6) protein is 23S rRNA (uracil(1939)-C(5))-methyltransferase RlmD.